Reading from the N-terminus, the 499-residue chain is Sialic acid-binding Ig-like lectin 8 (499 aa).

The signal sequence occupies residues 1–16; the sequence is MLLLLLLLPLLWGTKG. The Extracellular portion of the chain corresponds to 17–363; it reads MEGDRQYGDG…RPVSQVTLAA (347 aa). A carbohydrate-binding positions include Tyr-23, 72–75, Arg-125, and 134–138; these read RPYQ and SYKSQ. Positions 40 to 123 constitute an Ig-like V-type domain; it reads GLCVHVPCSF…ARKRDKGSYF (84 aa). Intrachain disulfides connect Cys-42-Cys-181, Cys-47-Cys-107, and Cys-175-Cys-224. 2 Ig-like C2-type domains span residues 157-240 and 246-344; these read PDIL…STVR and PPWN…LSLS. Asn-172 carries N-linked (GlcNAc...) asparagine glycosylation. 2 N-linked (GlcNAc...) asparagine glycosylation sites follow: Asn-249 and Asn-267. An intrachain disulfide couples Cys-283 to Cys-328. A helical transmembrane segment spans residues 364–384; that stretch reads VGGAGATALAFLSFCIIFIIV. Residues 385–499 lie on the Cytoplasmic side of the membrane; it reads RSCRKKSARP…HNPSSKEVRG (115 aa). Residues 410–443 are disordered; it reads RGSASQGPLTESWKDGNPLKKPPPAVAPSSGEEG. Residues 445–450 carry the ITIM motif motif; that stretch reads LHYATL. 2 disordered regions span residues 451 to 470 and 478 to 499; these read SFHK…DSEY and RETA…EVRG. The short motif at 468-473 is the SLAM-like motif element; the sequence is SEYSEI.

This sequence belongs to the immunoglobulin superfamily. SIGLEC (sialic acid binding Ig-like lectin) family. As to expression, expressed specifically on blood cells namely basophil, mast cells and eosinophils.

The protein resides in the membrane. Its function is as follows. Putative adhesion molecule that mediates sialic-acid dependent binding to blood cells. Preferentially binds to alpha-2,3-linked sialic acid. Also binds to alpha-2,6-linked sialic acid. The sialic acid recognition site may be masked by cis interactions with sialic acids on the same cell surface. Recognizes simultaneously epitopes having a terminal N-acetylneuraminic acid (sialic acid) and an underlying 6-O-sulfated galactose. Preferentially binds to Gal-6-sulfated sialyl-Lewis X glycan epitopes. In Homo sapiens (Human), this protein is Sialic acid-binding Ig-like lectin 8 (SIGLEC8).